We begin with the raw amino-acid sequence, 227 residues long: Ribosomal RNA large subunit methyltransferase E (227 aa).

Glycine 78, tryptophan 80, aspartate 103, aspartate 119, and aspartate 143 together coordinate S-adenosyl-L-methionine. The active-site Proton acceptor is the lysine 183.

Belongs to the class I-like SAM-binding methyltransferase superfamily. RNA methyltransferase RlmE family.

It localises to the cytoplasm. It carries out the reaction uridine(2552) in 23S rRNA + S-adenosyl-L-methionine = 2'-O-methyluridine(2552) in 23S rRNA + S-adenosyl-L-homocysteine + H(+). Specifically methylates the uridine in position 2552 of 23S rRNA at the 2'-O position of the ribose in the fully assembled 50S ribosomal subunit. The polypeptide is Ribosomal RNA large subunit methyltransferase E (Rickettsia felis (strain ATCC VR-1525 / URRWXCal2) (Rickettsia azadi)).